A 286-amino-acid chain; its full sequence is Homeobox-leucine zipper protein ATHB-20 (286 aa).

The homeobox DNA-binding region spans Leu-84 to Gln-143. The tract at residues Leu-144–Leu-179 is leucine-zipper.

Belongs to the HD-ZIP homeobox family. Class I subfamily. In terms of tissue distribution, widely expressed.

The protein resides in the nucleus. Its function is as follows. Probable transcription factor. The sequence is that of Homeobox-leucine zipper protein ATHB-20 (ATHB-20) from Arabidopsis thaliana (Mouse-ear cress).